The chain runs to 356 residues: Phosphoserine aminotransferase (356 aa).

R41 provides a ligand contact to L-glutamate. Pyridoxal 5'-phosphate is bound by residues 76–77, W102, T150, D169, and Q192; that span reads AS. The residue at position 193 (K193) is an N6-(pyridoxal phosphate)lysine. Residue 234-235 coordinates pyridoxal 5'-phosphate; the sequence is NT.

Belongs to the class-V pyridoxal-phosphate-dependent aminotransferase family. SerC subfamily. As to quaternary structure, homodimer. Pyridoxal 5'-phosphate is required as a cofactor.

Its subcellular location is the cytoplasm. The catalysed reaction is O-phospho-L-serine + 2-oxoglutarate = 3-phosphooxypyruvate + L-glutamate. The enzyme catalyses 4-(phosphooxy)-L-threonine + 2-oxoglutarate = (R)-3-hydroxy-2-oxo-4-phosphooxybutanoate + L-glutamate. The protein operates within amino-acid biosynthesis; L-serine biosynthesis; L-serine from 3-phospho-D-glycerate: step 2/3. It participates in cofactor biosynthesis; pyridoxine 5'-phosphate biosynthesis; pyridoxine 5'-phosphate from D-erythrose 4-phosphate: step 3/5. Catalyzes the reversible conversion of 3-phosphohydroxypyruvate to phosphoserine and of 3-hydroxy-2-oxo-4-phosphonooxybutanoate to phosphohydroxythreonine. The sequence is that of Phosphoserine aminotransferase from Flavobacterium johnsoniae (strain ATCC 17061 / DSM 2064 / JCM 8514 / BCRC 14874 / CCUG 350202 / NBRC 14942 / NCIMB 11054 / UW101) (Cytophaga johnsonae).